A 159-amino-acid polypeptide reads, in one-letter code: Ribosome maturation factor RimP (159 aa).

Belongs to the RimP family.

The protein localises to the cytoplasm. Its function is as follows. Required for maturation of 30S ribosomal subunits. The chain is Ribosome maturation factor RimP from Trichlorobacter lovleyi (strain ATCC BAA-1151 / DSM 17278 / SZ) (Geobacter lovleyi).